The sequence spans 497 residues: tRNA-2-methylthio-N(6)-dimethylallyladenosine synthase (497 aa).

Residues 44–161 (KKVFVTTQGC…LPELYDQSHQ (118 aa)) form the MTTase N-terminal domain. 6 residues coordinate [4Fe-4S] cluster: cysteine 53, cysteine 90, cysteine 124, cysteine 205, cysteine 209, and cysteine 212. The Radical SAM core domain occupies 191–423 (RVEGFKAFVS…QKVIIDSTLA (233 aa)). The TRAM domain maps to 426-494 (HEMVGTTTRV…PHMVKGEIEA (69 aa)).

Belongs to the methylthiotransferase family. MiaB subfamily. In terms of assembly, monomer. Requires [4Fe-4S] cluster as cofactor.

The protein resides in the cytoplasm. It catalyses the reaction N(6)-dimethylallyladenosine(37) in tRNA + (sulfur carrier)-SH + AH2 + 2 S-adenosyl-L-methionine = 2-methylsulfanyl-N(6)-dimethylallyladenosine(37) in tRNA + (sulfur carrier)-H + 5'-deoxyadenosine + L-methionine + A + S-adenosyl-L-homocysteine + 2 H(+). Functionally, catalyzes the methylthiolation of N6-(dimethylallyl)adenosine (i(6)A), leading to the formation of 2-methylthio-N6-(dimethylallyl)adenosine (ms(2)i(6)A) at position 37 in tRNAs that read codons beginning with uridine. The protein is tRNA-2-methylthio-N(6)-dimethylallyladenosine synthase of Psychrobacter cryohalolentis (strain ATCC BAA-1226 / DSM 17306 / VKM B-2378 / K5).